Here is a 106-residue protein sequence, read N- to C-terminus: Urease subunit beta (106 aa).

Belongs to the urease beta subunit family. As to quaternary structure, heterotrimer of UreA (gamma), UreB (beta) and UreC (alpha) subunits. Three heterotrimers associate to form the active enzyme.

The protein localises to the cytoplasm. The catalysed reaction is urea + 2 H2O + H(+) = hydrogencarbonate + 2 NH4(+). It functions in the pathway nitrogen metabolism; urea degradation; CO(2) and NH(3) from urea (urease route): step 1/1. The chain is Urease subunit beta from Acinetobacter baumannii (strain ATCC 17978 / DSM 105126 / CIP 53.77 / LMG 1025 / NCDC KC755 / 5377).